The chain runs to 54 residues: Large ribosomal subunit protein bL33 (54 aa).

Belongs to the bacterial ribosomal protein bL33 family.

The sequence is that of Large ribosomal subunit protein bL33 from Herpetosiphon aurantiacus (strain ATCC 23779 / DSM 785 / 114-95).